The following is an 872-amino-acid chain: Alanine--tRNA ligase (872 aa).

Residues H567, H571, C669, and H673 each coordinate Zn(2+).

Belongs to the class-II aminoacyl-tRNA synthetase family. The cofactor is Zn(2+).

It localises to the cytoplasm. It carries out the reaction tRNA(Ala) + L-alanine + ATP = L-alanyl-tRNA(Ala) + AMP + diphosphate. In terms of biological role, catalyzes the attachment of alanine to tRNA(Ala) in a two-step reaction: alanine is first activated by ATP to form Ala-AMP and then transferred to the acceptor end of tRNA(Ala). Also edits incorrectly charged Ser-tRNA(Ala) and Gly-tRNA(Ala) via its editing domain. The polypeptide is Alanine--tRNA ligase (Streptococcus agalactiae serotype Ia (strain ATCC 27591 / A909 / CDC SS700)).